The chain runs to 635 residues: Surface protein F (635 aa).

The first 37 residues, 1-37 (MAKYRGKPFQLYVKLSCSTMMATSIILTNILPYDAQA), serve as a signal peptide directing secretion. Basic and acidic residues-rich tracts occupy residues 101 to 112 (NELDSKDNKSSH) and 193 to 202 (KSKDASKDTS). 2 disordered regions span residues 101-122 (NELDSKDNKSSHTEMNGQSDID) and 192-228 (HKSKDASKDTSEDPAVSTTDNNHEVAKTPNNDGSGHV). Positions 597 to 601 (LPKAG) match the LPXTG sorting signal motif. Ala-600 carries the pentaglycyl murein peptidoglycan amidated alanine modification. Positions 601-635 (GETIKEHWLPISVIVGAMGVLMIWLSRRNKLKNKA) are cleaved as a propeptide — removed by sortase.

The protein localises to the secreted. It is found in the cell wall. In Staphylococcus aureus (strain NCTC 8325 / PS 47), this protein is Surface protein F.